Reading from the N-terminus, the 793-residue chain is Lon protease 1 (793 aa).

Residues 8–202 enclose the Lon N-terminal domain; sequence VPVIPLKNSV…KLLDRLQELK (195 aa). An ATP-binding site is contributed by 354 to 361; the sequence is GPPGVGKT. In terms of domain architecture, Lon proteolytic spans 590–770; that stretch reads LLPPGVVTGL…NEVLKITLGV (181 aa). Active-site residues include Ser-676 and Lys-719.

Belongs to the peptidase S16 family. In terms of assembly, homohexamer. Organized in a ring with a central cavity.

It is found in the cytoplasm. It carries out the reaction Hydrolysis of proteins in presence of ATP.. Its function is as follows. ATP-dependent serine protease that mediates the selective degradation of mutant and abnormal proteins as well as certain short-lived regulatory proteins. Required for cellular homeostasis and for survival from DNA damage and developmental changes induced by stress. Degrades polypeptides processively to yield small peptide fragments that are 5 to 10 amino acids long. Binds to DNA in a double-stranded, site-specific manner. The sequence is that of Lon protease 1 from Bdellovibrio bacteriovorus (strain ATCC 15356 / DSM 50701 / NCIMB 9529 / HD100).